Reading from the N-terminus, the 278-residue chain is tRNA (guanine-N(7)-)-methyltransferase (278 aa).

A disordered region spans residues 1–42 (MRHDGPMHVQPGVGLQSDTSSSTGTGSGPADEPEAEKSAWGY). E106, E131, N160, and D183 together coordinate S-adenosyl-L-methionine. Residue D183 is part of the active site. Residues K187, D219, and 256–259 (TKYE) contribute to the substrate site.

Belongs to the class I-like SAM-binding methyltransferase superfamily. TrmB family.

It catalyses the reaction guanosine(46) in tRNA + S-adenosyl-L-methionine = N(7)-methylguanosine(46) in tRNA + S-adenosyl-L-homocysteine. It participates in tRNA modification; N(7)-methylguanine-tRNA biosynthesis. Its function is as follows. Catalyzes the formation of N(7)-methylguanine at position 46 (m7G46) in tRNA. This chain is tRNA (guanine-N(7)-)-methyltransferase, found in Mycobacterium ulcerans (strain Agy99).